Reading from the N-terminus, the 318-residue chain is Trans-prenyltransferase (318 aa).

A helical transmembrane segment spans residues 1–21 (MLHLIYISIIVVLIIILISYT). Isopentenyl diphosphate is bound by residues lysine 85, arginine 88, and histidine 122. Aspartate 129 and aspartate 135 together coordinate Mg(2+). Arginine 140 contacts dimethylallyl diphosphate. Arginine 141 provides a ligand contact to isopentenyl diphosphate. The dimethylallyl diphosphate site is built by lysine 216, threonine 217, and glutamine 254.

The protein belongs to the FPP/GGPP synthase family. Asfivirus trans-prenyltransferase subfamily. Requires Mg(2+) as cofactor.

It localises to the host endoplasmic reticulum. The protein resides in the host membrane. It carries out the reaction isopentenyl diphosphate + dimethylallyl diphosphate = (2E)-geranyl diphosphate + diphosphate. The catalysed reaction is isopentenyl diphosphate + (2E)-geranyl diphosphate = (2E,6E)-farnesyl diphosphate + diphosphate. It catalyses the reaction isopentenyl diphosphate + (2E,6E)-farnesyl diphosphate = (2E,6E,10E)-geranylgeranyl diphosphate + diphosphate. The enzyme catalyses isopentenyl diphosphate + (2E,6E,10E)-geranylgeranyl diphosphate = (2E,6E,10E,14E)-geranylfarnesyl diphosphate + diphosphate. The protein operates within isoprenoid biosynthesis; farnesyl diphosphate biosynthesis; farnesyl diphosphate from geranyl diphosphate and isopentenyl diphosphate: step 1/1. Its pathway is isoprenoid biosynthesis; geranyl diphosphate biosynthesis; geranyl diphosphate from dimethylallyl diphosphate and isopentenyl diphosphate: step 1/1. It participates in isoprenoid biosynthesis; geranylgeranyl diphosphate biosynthesis; geranylgeranyl diphosphate from farnesyl diphosphate and isopentenyl diphosphate: step 1/1. Trans-prenyltransferase that catalyzes the sequential condensation of isopentenyl diphosphate (IPP) with different allylic diphosphates, such as dimethylallyl diphosphate (DMAPP), geranyl diphosphate (GPP), farnesyl diphosphate (FPP) and geranylgeranyl diphosphate (GGPP), farnesyl diphosphate being the best allylic substrate. This is Trans-prenyltransferase from African swine fever virus (isolate Tick/South Africa/Pretoriuskop Pr4/1996) (ASFV).